The chain runs to 202 residues: MSEEALGELSGYIRERLGDAIEEANLAYGELTLCVPVASLIGVLTFLRDDVQCQFVNLTDISGVDYPQREKRFDVVYQLLSPRQNQRIRVKVQADEDTLVPSAVPVFFGAEWYEREAYDMYGILFSGHPDLRRILTDYGFEGHPLRKDFPLTGFVEVRYNDELKRVVYEPVQLRQEFRNFDFLSPWEGTDYVLPGDEKAKTN.

The protein belongs to the complex I 30 kDa subunit family. As to quaternary structure, NDH-1 is composed of 14 different subunits. Subunits NuoB, C, D, E, F, and G constitute the peripheral sector of the complex.

It is found in the cell inner membrane. The enzyme catalyses a quinone + NADH + 5 H(+)(in) = a quinol + NAD(+) + 4 H(+)(out). Its function is as follows. NDH-1 shuttles electrons from NADH, via FMN and iron-sulfur (Fe-S) centers, to quinones in the respiratory chain. The immediate electron acceptor for the enzyme in this species is believed to be ubiquinone. Couples the redox reaction to proton translocation (for every two electrons transferred, four hydrogen ions are translocated across the cytoplasmic membrane), and thus conserves the redox energy in a proton gradient. This is NADH-quinone oxidoreductase subunit C from Brucella canis (strain ATCC 23365 / NCTC 10854 / RM-666).